A 23-amino-acid polypeptide reads, in one-letter code: M-myrmeciitoxin-Mp2b (23 aa).

Gln-23 bears the Glutamine amide mark.

The protein belongs to the formicidae venom precursor-01 superfamily. Ant pilosulin family. Heterodimer with M-MIITX-Mp2a (pilosulin-3a) (AC Q26464); disulfide-linked. Only heterodimers (and not monomers) have been identified in the venom. As to expression, expressed by the venom gland.

It localises to the secreted. In terms of biological role, heterodimer protein that may serve both defensive (pain-inducing) and predatory (insecticidal) roles. Has membrane-disrupting activity and shows induction of non-specific calcium influx into cells,. Shows broad-spectrum activity against a diverse range of bacteria, and cell lines, as well as hemolytic activity (EC(50)=2.18 uM). In vivo, shows moderate insecticidal activity against D.melanogaster and potent anthelmintic activity against the veterinary nematode H.contortus. In addition, intraplantar injection into mice induces nocifensive behavior and mechanical allodynia. The polypeptide is M-myrmeciitoxin-Mp2b (Myrmecia pilosula (Jack jumper ant)).